The primary structure comprises 265 residues: Urease accessory protein UreH (265 aa).

Belongs to the UreD family. In terms of assembly, ureH, UreF and UreG form a complex that acts as a GTP-hydrolysis-dependent molecular chaperone, activating the urease apoprotein by helping to assemble the nickel containing metallocenter of UreC. The UreE protein probably delivers the nickel.

It localises to the cytoplasm. Its function is as follows. Required for maturation of urease via the functional incorporation of the urease nickel metallocenter. This Helicobacter pylori (strain P12) protein is Urease accessory protein UreH.